Here is a 368-residue protein sequence, read N- to C-terminus: Quinolinate synthase (368 aa).

Iminosuccinate is bound by residues His46 and Ser63. Cys110 is a binding site for [4Fe-4S] cluster. Iminosuccinate contacts are provided by residues Tyr141–Asn143 and Ser162. Position 230 (Cys230) interacts with [4Fe-4S] cluster. Residues His256–Glu258 and Thr273 contribute to the iminosuccinate site. Cys320 provides a ligand contact to [4Fe-4S] cluster.

It belongs to the quinolinate synthase family. Type 3 subfamily. The cofactor is [4Fe-4S] cluster.

The protein resides in the cytoplasm. It catalyses the reaction iminosuccinate + dihydroxyacetone phosphate = quinolinate + phosphate + 2 H2O + H(+). It functions in the pathway cofactor biosynthesis; NAD(+) biosynthesis; quinolinate from iminoaspartate: step 1/1. In terms of biological role, catalyzes the condensation of iminoaspartate with dihydroxyacetone phosphate to form quinolinate. This is Quinolinate synthase from Bacillus cereus (strain ATCC 10987 / NRS 248).